Here is a 181-residue protein sequence, read N- to C-terminus: Squamosa promoter-binding-like protein 5 (181 aa).

Residues methionine 1–glycine 10 are compositionally biased toward basic residues. The interval methionine 1–valine 58 is disordered. Acidic residues predominate over residues valine 22–aspartate 39. Residues glutamate 40–arginine 51 show a composition bias toward basic and acidic residues. The SBP-type zinc-finger motif lies at serine 60–isoleucine 137. Zn(2+) contacts are provided by cysteine 63, cysteine 68, cysteine 85, histidine 88, cysteine 104, cysteine 107, histidine 111, and cysteine 123. Positions lysine 120 to lysine 136 match the Bipartite nuclear localization signal motif. Residues alanine 128–arginine 181 form a disordered region. The segment covering methionine 170–arginine 181 has biased composition (polar residues).

Zn(2+) is required as a cofactor. Expressed in the inflorescence apical meristem and young flowers.

The protein localises to the nucleus. Its subcellular location is the cytoplasm. In terms of biological role, trans-acting factor that binds specifically to the consensus nucleotide sequence 5'-TNCGTACAA-3' of AP1 promoter. Promotes both vegetative phase change and flowering. The protein is Squamosa promoter-binding-like protein 5 (SPL5) of Arabidopsis thaliana (Mouse-ear cress).